The sequence spans 271 residues: Methyltransferase psoC (271 aa).

The protein belongs to the methyltransferase superfamily. LaeA methyltransferase family.

Its pathway is secondary metabolite biosynthesis. Its function is as follows. Methyltransferase; part of the gene cluster that mediates the biosynthesis of pseurotin A, a competitive inhibitor of chitin synthase and an inducer of nerve-cell proliferation. The PKS-NRPS hybrid synthetase psoA is responsible for the biosynthesis of azaspirene, one of the first intermediates having the 1-oxa-7-azaspiro[4,4]-non-2-ene-4,6-dione core of pseurotin, via condensation of one acetyl-CoA, 4 malonyl-CoA, and a L-phenylalanine molecule. The dual-functional monooxygenase/methyltransferase psoF seems to be involved in the addition of the C3 methyl group onto the pseurotin scaffold. Azaspirene is then converted to synerazol through 4 steps including oxidation of C17 by the cytochrome P450 monooxygenase psoD, O-methylation of the hydroxy group of C8 by the methyltransferase psoC, and the trans-to-cis isomerization of the C13 olefin by the glutathione S-transferase psoE. The fourth step of synerazol production is performed by the dual-functional monooxygenase/methyltransferase psoF which seems to catalyze the epoxidation of the intermediate deepoxy-synerazol. Synerazol can be attacked by a water molecule nonenzymatically at two different positions to yield two diol products, pseurotin A and pseurotin D. This Aspergillus fumigatus (strain ATCC MYA-4609 / CBS 101355 / FGSC A1100 / Af293) (Neosartorya fumigata) protein is Methyltransferase psoC.